Reading from the N-terminus, the 98-residue chain is YcgL domain-containing protein Ping_1076 (98 aa).

The 85-residue stretch at 1 to 85 folds into the YcgL domain; the sequence is MLCAVYKSIR…PPVNHLQEHK (85 aa). Positions 75-98 are disordered; sequence PPPVNHLQEHKDWKKKRQENKNEI.

This Psychromonas ingrahamii (strain DSM 17664 / CCUG 51855 / 37) protein is YcgL domain-containing protein Ping_1076.